Consider the following 870-residue polypeptide: Dynamin-2 (870 aa).

The 267-residue stretch at 28–294 folds into the Dynamin-type G domain; it reads HLDLPQIAVV…LTNHIRESLP (267 aa). Positions 38-45 are G1 motif; the sequence is GGQSAGKS. Serine 41, glycine 43, lysine 44, serine 45, serine 46, arginine 59, and glycine 60 together coordinate GDP. A G2 motif region spans residues 64-66; the sequence is VTR. Residues 136 to 139 form a G3 motif region; the sequence is DLPG. The tract at residues 205 to 208 is G4 motif; it reads TKLD. Lysine 206, aspartate 208, and aspartate 211 together coordinate GDP. Residue tyrosine 231 is modified to Phosphotyrosine. Residues 235–238 are G5 motif; the sequence is VNRS. GDP is bound by residues asparagine 236, arginine 237, and glutamine 239. Residue lysine 299 is modified to N6-acetyllysine. The 107-residue stretch at 519 to 625 folds into the PH domain; the sequence is LVIRRGWLTI…WKASFLRAGV (107 aa). At tyrosine 597 the chain carries Phosphotyrosine. Lysine 598 carries the N6-acetyllysine modification. The GED domain occupies 653-744; that stretch reads VETIRNLVDS…IIGDISTSTV (92 aa). Positions 741–870 are disordered; the sequence is TSTVSTPVPP…IRPAEPSLLD (130 aa). At threonine 755 the chain carries Phosphothreonine. Residues 756–767 show a composition bias toward polar residues; that stretch reads WLQNTSGHSPTP. At serine 764 the chain carries Phosphoserine; by CDK1. The span at 826-846 shows a compositional bias: pro residues; the sequence is SAPPQIPSRPARIPPGIPPGV. Low complexity predominate over residues 847–864; that stretch reads PSRRAPAAPSRPTIIRPA.

The protein belongs to the TRAFAC class dynamin-like GTPase superfamily. Dynamin/Fzo/YdjA family. In terms of assembly, oligomerizes into a helical polymer that self-assembles around the vesicle membrane, when associated to the menbrane through lipid binding. Interacts with SHANK1 and SHANK2. Interacts with SNX9. Interacts (via C-terminal proline-rich domain (PRD)) with SNX18 (via SH3 domain); this interaction regulates ATG9A and ATG16L1 trafficking from recycling endosomes to sites of autophagosome formation. Interacts with SNX33 (via SH3 domain). Interacts with MYO1E (via SH3 domain). Interacts with PSTPIP1 (via SH3 domain). Interacts with CTNND2. Interacts (via C-terminal proline-rich domain (PRD)) with BIN1 (via SH3 domain); this interaction allows the recruitment of DNM2 to the membrane tubules and inhibits self-assembly-stimulated GTPase activity on the membrane. Interacts with GABARAP, GABARAPL1 and GABARAPL2. Interacts with MAP1LC3B (the lipidate and non-lipidated LC3 form); this interaction mediates recycling endosome scission leading to autophagosome release. Interacts with ITSN1. Interacts (via C-terminal proline-rich domain (PRD)) with SH3BP4 (via SH3 domain); this interaction controls the GTPase activity and is prevented by EGFR-induced tyrosine phosphorylation of either DNM2 or SH3BP4. Interacts with MYOF. May interact with PIK3C3. May be a component of a complex composed of RAB5A (in GDP-bound form), DYN2 and PIK3C3. Interacts with SDC4; this interaction is markedly enhanced at focal ahesion site upon induction of focal adhesions and stress-fiber formation. Interacts with ACTN1. Interacts with CTTN; this interaction stimulates the intrinsic GTPase activity of DNM2 and stabilizes the association of DNM2 and actin filaments; in addition this interaction is stimulated by ligand binding to the receptor, leading to the recruitment of the DNM2-CTTN complex to the sequestered receptor-ligand complex to its internalization. Interacts with NOSTRIN (via SH3 domain); this interaction allows the recruitment of NOS3 to dynamin-positive structures. Interacts with TUBG1; this interaction may participate in centrosome cohesion. In terms of processing, phosphorylation at Ser-848 by GSK3-alpha relieves the inhibition of BIN1 and promotes endocytosis. Phosphorylation at Ser-764 by CDK1 is greatly increased upon mitotic entry. It regulates cytokinesis downstream of calcineurin, and does not affect clathrin-mediated endocytosis. Dephosphorylated by calcineurin/PP2 during cytokinesis in a Ca(2+)- and calmodulin-dependent manner. Phosphorylated on tyrosine residues by EGFR. Phosphorylated on tyrosine residues after activation of SRC. In terms of tissue distribution, expressed in most tissues during embryonic development, including the peripheral nervous system although no expression is evident in skeletal muscle or heart.

The protein resides in the cytoplasm. It localises to the cytoskeleton. The protein localises to the cytoplasmic vesicle. It is found in the clathrin-coated vesicle. Its subcellular location is the cell projection. The protein resides in the uropodium. It localises to the endosome. The protein localises to the microtubule organizing center. It is found in the centrosome. Its subcellular location is the centriole. The protein resides in the recycling endosome. It localises to the phagocytic cup. The protein localises to the phagosome membrane. It is found in the podosome. Its subcellular location is the cell junction. The protein resides in the postsynaptic density. It localises to the synapse. The protein localises to the synaptosome. It is found in the midbody. Its subcellular location is the membrane. The protein resides in the clathrin-coated pit. The catalysed reaction is GTP + H2O = GDP + phosphate + H(+). Its function is as follows. Catalyzes the hydrolysis of GTP and utilizes this energy to mediate vesicle scission at plasma membrane during endocytosis and filament remodeling at many actin structures during organization of the actin cytoskeleton. Plays an important role in vesicular trafficking processes, namely clathrin-mediated endocytosis (CME), exocytic and clathrin-coated vesicle from the trans-Golgi network, and PDGF stimulated macropinocytosis. During vesicular trafficking process, associates to the membrane, through lipid binding, and self-assembles into ring-like structure through oligomerization to form a helical polymer around the vesicle membrane and leading to vesicle scission. Plays a role in organization of the actin cytoskeleton by mediating arrangement of stress fibers and actin bundles in podocytes. During organization of the actin cytoskeleton, self-assembles into ring-like structure that directly bundles actin filaments to form typical membrane tubules decorated with dynamin spiral polymers. Self-assembly increases GTPase activity and the GTP hydrolysis causes the rapid depolymerization of dynamin spiral polymers, and results in dispersion of actin bundles. Remodels, through its interaction with CTTN, bundled actin filaments in a GTPase-dependent manner and plays a role in orchestrating the global actomyosin cytoskeleton. The interaction with CTTN stabilizes the interaction of DNM2 and actin filaments and stimulates the intrinsic GTPase activity that results in actin filament-barbed ends and increases the sensitivity of filaments in bundles to the actin depolymerizing factor, CFL1. Plays a role in the autophagy process, by participating in the formation of ATG9A vesicles destined for the autophagosomes through its interaction with SNX18, by mediating recycling endosome scission leading to autophagosome release through MAP1LC3B interaction. Also regulates maturation of apoptotic cell corpse-containing phagosomes by recruiting PIK3C3 to the phagosome membrane. Also plays a role in cytokinesis. May participate in centrosome cohesion through its interaction with TUBG1. Plays a role in the regulation of neuron morphology, axon growth and formation of neuronal growth cones. Involved in membrane tubulation. In Mus musculus (Mouse), this protein is Dynamin-2.